A 489-amino-acid chain; its full sequence is N-succinylglutamate 5-semialdehyde dehydrogenase (489 aa).

223 to 228 (GSSRTG) serves as a coordination point for NAD(+). Catalysis depends on residues Glu-246 and Cys-280.

Belongs to the aldehyde dehydrogenase family. AstD subfamily.

The catalysed reaction is N-succinyl-L-glutamate 5-semialdehyde + NAD(+) + H2O = N-succinyl-L-glutamate + NADH + 2 H(+). It functions in the pathway amino-acid degradation; L-arginine degradation via AST pathway; L-glutamate and succinate from L-arginine: step 4/5. In terms of biological role, catalyzes the NAD-dependent reduction of succinylglutamate semialdehyde into succinylglutamate. The protein is N-succinylglutamate 5-semialdehyde dehydrogenase of Aeromonas hydrophila subsp. hydrophila (strain ATCC 7966 / DSM 30187 / BCRC 13018 / CCUG 14551 / JCM 1027 / KCTC 2358 / NCIMB 9240 / NCTC 8049).